Reading from the N-terminus, the 471-residue chain is Glutamate--tRNA ligase (471 aa).

The 'HIGH' region signature appears at 9–19; that stretch reads PSPTGYLHVGG. Cys-98, Cys-100, Cys-125, and His-127 together coordinate Zn(2+). The 'KMSKS' region motif lies at 237–241; the sequence is KLSKR. Lys-240 provides a ligand contact to ATP.

Belongs to the class-I aminoacyl-tRNA synthetase family. Glutamate--tRNA ligase type 1 subfamily. Monomer. Requires Zn(2+) as cofactor.

The protein resides in the cytoplasm. It catalyses the reaction tRNA(Glu) + L-glutamate + ATP = L-glutamyl-tRNA(Glu) + AMP + diphosphate. In terms of biological role, catalyzes the attachment of glutamate to tRNA(Glu) in a two-step reaction: glutamate is first activated by ATP to form Glu-AMP and then transferred to the acceptor end of tRNA(Glu). The chain is Glutamate--tRNA ligase from Escherichia coli (strain ATCC 8739 / DSM 1576 / NBRC 3972 / NCIMB 8545 / WDCM 00012 / Crooks).